A 58-amino-acid chain; its full sequence is UPF0339 protein TDE_0826 (58 aa).

The protein belongs to the UPF0339 family.

This Treponema denticola (strain ATCC 35405 / DSM 14222 / CIP 103919 / JCM 8153 / KCTC 15104) protein is UPF0339 protein TDE_0826.